The sequence spans 315 residues: MLQIASLFAGVGGIDLGFEQTGYFETVWANEYDKNAAITYQSNFKNKLIIDDIRNIKVEDVPDFDVLLSGFPCTSFSVAGYRKGFEDEKSGDLFFETLRLIVAKKPQVIFLENVKNLVGHDNGNTFKVIYEALESNGYHIKYQVLNAKDFGNIPQNRERIYIVGFRNIEHYKNFNFPMPQPLTLTIKDMINLSDKLDDRFYYTEDKCSFYSPLQEQMTSDETIYQWRRKYVRENKSNVCPTLTANMGTGGHNVPLVKTKHGIRKLTPRECFNFQGYPEDFILPELAPTHLYKQAGNSVVVPVIRRIAENIYKSML.

The SAM-dependent MTase C5-type domain maps to 2–315 (LQIASLFAGV…IAENIYKSML (314 aa)). C73 is an active-site residue.

Belongs to the class I-like SAM-binding methyltransferase superfamily. C5-methyltransferase family.

It carries out the reaction a 2'-deoxycytidine in DNA + S-adenosyl-L-methionine = a 5-methyl-2'-deoxycytidine in DNA + S-adenosyl-L-homocysteine + H(+). Functionally, a methylase that recognizes the double-stranded sequence 5'-GCNGC-3', methylates C-? on both strands, and protects the DNA from cleavage by the Bsp6I endonuclease. The protein is Type II methyltransferase M.Bsp6I of Bacillus sp. (strain RFL6).